Here is a 195-residue protein sequence, read N- to C-terminus: Glycerol-3-phosphate acyltransferase 1 (195 aa).

Transmembrane regions (helical) follow at residues 6 to 26, 52 to 72, 74 to 94, 117 to 137, and 168 to 188; these read VILTGIFMAYAVGSLAGGHFL, LGIAAGIMTFIWDTAKGFLVV, LGLKGGGAELGVLMALAAVAG, LAVYPAAVPPGAALMGLLTFL, and FGLGLAAIMLLRHGPLVISLF.

It belongs to the PlsY family. In terms of assembly, probably interacts with PlsX.

It localises to the cell membrane. The catalysed reaction is an acyl phosphate + sn-glycerol 3-phosphate = a 1-acyl-sn-glycero-3-phosphate + phosphate. It participates in lipid metabolism; phospholipid metabolism. Catalyzes the transfer of an acyl group from acyl-phosphate (acyl-PO(4)) to glycerol-3-phosphate (G3P) to form lysophosphatidic acid (LPA). This enzyme utilizes acyl-phosphate as fatty acyl donor, but not acyl-CoA or acyl-ACP. This is Glycerol-3-phosphate acyltransferase 1 from Moorella thermoacetica (strain ATCC 39073 / JCM 9320).